Here is an 892-residue protein sequence, read N- to C-terminus: MLANAIAALLLGSGIASAAGHGSPLTSKAGHRAVIPDWDLKSSSDVSKDLGGLSKPGVDTSSWYHAGTSRCTIMGCLINAGVYNDEELWYSDNLNHVNWGQFSVPWVYRHEFALSPAKGKHFLLQTNGITSKADLFFNGKQIADKEYQSGAYAGRTYDITNLAAKKNALLVQVYPTDYLYDFALGYVDWNPYPSDNGSGIWRDITIKETGSVSMGPVSVLVDIDVPVEKNPARVTVRAEAQNLESHAVEFNAAAVISGNSCSGEALKQTIKLAPGEKKLVQFTQTIKTPSIWWPKQWGDQPLYTAEVTFSVKGAVSDTAQTKFGVRKVTSFVNQFNDTQYSVNGHPFQVIGGGYGADMFLRWDSERFTRIVEYMLDMHQNTIRLEGKMEHPELYEICDEYGLMVMPGWECCDKWEAWAYNDELAIFPPPVWDANDYETANYSMIHEAAMMQPHPSVLTFLVGSDFWPNDEAVVLYANALKNAGWQTPIIASASKRGFPALLGPGGMKMDGPYDWVPPNYWYDVEPSEDRLGAAFGFGSELGAGVGTPELSSLRRFLNQSDLDDLWKNPNKNLFHMSTNASSFYNRKIYNQGLWKRYGAPTSLDDYLLKAQMMDYEATRAQYEGFGALWTASRPATGVIYWMLNNAWPSLHWNQFDYYLHPAGSYFGTKVGSRIEHVAYNYQKKEIWVINHSLYQTGSRNIKVELIDMNGKQIAKKLVQVRTKANSGFKAMDISSDINKLSSVAFLRLVLSDEKGSVLSRNVYWVTKTIDELNWDESTWYYTPVSKFVDYTPLNTLATAQVSVTTSGGKHLPGIPGSQTRTVTLENKSSVPAVFIRLTLVDSKGNDVNPVSWSDNYVTLWPHEKLQLEVGGWDGSGDKIQISGKNIKATTVKL.

An N-terminal signal peptide occupies residues 1–18 (MLANAIAALLLGSGIASA). Positions 19-28 (AGHGSPLTSK) are excised as a propeptide. 3 N-linked (GlcNAc...) asparagine glycosylation sites follow: N196, N336, and N440. D464 acts as the Proton donor in catalysis. Catalysis depends on E539, which acts as the Nucleophile. N-linked (GlcNAc...) asparagine glycans are attached at residues N557, N578, N689, and N825.

It belongs to the glycosyl hydrolase 2 family. In terms of assembly, monomer.

Its subcellular location is the secreted. It localises to the extracellular space. The catalysed reaction is Hydrolysis of chitosan or chitosan oligosaccharides to remove successive D-glucosamine residues from the non-reducing termini.. Functionally, hydrolyzes chitosan and chitooligosaccharides with retention of anomeric configuration. Has no activity against beta-D-galactoside, beta-D-glucuronide, beta-D-mannoside, chitin, glycol chitosan, cellulose, N,N'-diacetylchitibiose and pNP-GlcNAc. The polypeptide is Exo-beta-D-glucosaminidase (Hypocrea jecorina (Trichoderma reesei)).